The following is a 150-amino-acid chain: Auxin-binding protein 5 (150 aa).

The signal sequence occupies residues 1–41 (MVRRRPATGAAQRPQLAAVGRGLLLASVLAAAASSLPVAES). Residues histidine 98, histidine 100, and glutamate 104 each coordinate Zn(2+). Asparagine 136 carries N-linked (GlcNAc...) asparagine glycosylation. Zn(2+) is bound at residue histidine 147.

As to quaternary structure, homodimer.

It localises to the endoplasmic reticulum lumen. Functionally, this is probably a receptor for the plant hormone auxin. The protein is Auxin-binding protein 5 (ABP5) of Zea mays (Maize).